The sequence spans 111 residues: WAP four-disulfide core domain protein 12 (111 aa).

The signal sequence occupies residues 1–23 (MGSSSFLVLMVSLALVTLVVVEG). The region spanning 27–74 (GIEKAGVCPADNVRCFKSNPPQCHTDQDCLGERKCCYLHCGFKCVIPV) is the WAP domain. 4 cysteine pairs are disulfide-bonded: cysteine 34–cysteine 62, cysteine 41–cysteine 66, cysteine 49–cysteine 61, and cysteine 55–cysteine 70. The tract at residues 80 to 111 (GGNKDEDVSGPHPEPGWEAKSPGSSSTGCPQI) is disordered. A compositionally biased stretch (polar residues) spans 101–111 (PGSSSTGCPQI).

It localises to the secreted. Antibacterial protein. Putative acid-stable proteinase inhibitor. This is WAP four-disulfide core domain protein 12 (WFDC12) from Colobus guereza (Mantled guereza).